The following is a 239-amino-acid chain: Metallo-beta-lactamase IND-1 (239 aa).

Positions 1 to 20 (MKKSIRFFIVSILLSPFASA) are cleaved as a signal peptide. The Zn(2+) site is built by His-96, His-98, Asp-100, His-159, and Cys-178. Lys-181 contributes to the a beta-lactam binding site. His-220 is a Zn(2+) binding site.

It belongs to the metallo-beta-lactamase superfamily. Class-B beta-lactamase family. In terms of assembly, monomer. Requires Zn(2+) as cofactor.

The protein localises to the periplasm. It carries out the reaction a beta-lactam + H2O = a substituted beta-amino acid. Its activity is regulated as follows. Inhibited by chelating agents such as EDTA. Not susceptible to inactivation by the beta-lactamase-blocking agent clavulanic acid. In terms of biological role, class B beta-lactamase which confers resistance to the beta-lactam antibiotics, including penicillins, cephalosporins and carbapenems. Acts via hydrolysis of the beta-lactam ring. Has penicillin-, cephalosporin- and carbapenem-hydrolyzing activities. The protein is Metallo-beta-lactamase IND-1 of Chryseobacterium indologenes (Flavobacterium indologenes).